The primary structure comprises 404 residues: Biflaviolin synthase CYP158A2 (404 aa).

The flaviolin site is built by Arg-288 and Leu-293. Cys-353 contacts heme.

The protein belongs to the cytochrome P450 family. It depends on heme as a cofactor.

The catalysed reaction is 2 flaviolin + 2 reduced [2Fe-2S]-[ferredoxin] + O2 + H(+) = 3,3'-biflaviolin + 2 oxidized [2Fe-2S]-[ferredoxin] + 2 H2O. The enzyme catalyses 2 flaviolin + 2 reduced [2Fe-2S]-[ferredoxin] + O2 + H(+) = 3,8'-biflaviolin + 2 oxidized [2Fe-2S]-[ferredoxin] + 2 H2O. It functions in the pathway pigment biosynthesis. Its function is as follows. Catalyzes oxidative C-C coupling reaction to polymerize flaviolin and form highly conjugated pigments which protect the soil bacterium from deleterious effects of UV irradiation (three isomers of biflaviolin and one triflaviolin). In Streptomyces coelicolor (strain ATCC BAA-471 / A3(2) / M145), this protein is Biflaviolin synthase CYP158A2.